The chain runs to 320 residues: 33 kDa chaperonin (320 aa).

The span at 1 to 17 (MTDASGSERLKRTKDIS) shows a compositional bias: basic and acidic residues. Positions 1–27 (MTDASGSERLKRTKDISESTPPSSLPD) are disordered. Disulfide bonds link C262-C264 and C295-C298.

The protein belongs to the HSP33 family. In terms of processing, under oxidizing conditions two disulfide bonds are formed involving the reactive cysteines. Under reducing conditions zinc is bound to the reactive cysteines and the protein is inactive.

The protein localises to the cytoplasm. Functionally, redox regulated molecular chaperone. Protects both thermally unfolding and oxidatively damaged proteins from irreversible aggregation. Plays an important role in the bacterial defense system toward oxidative stress. This Synechococcus sp. (strain JA-3-3Ab) (Cyanobacteria bacterium Yellowstone A-Prime) protein is 33 kDa chaperonin.